The chain runs to 115 residues: Pro-FMRFamide-related neuropeptide FF (115 aa).

The first 22 residues, 1 to 22, serve as a signal peptide directing secretion; it reads MDARQAAALLLVLLLVTDWSHA. 2 disordered regions span residues 20-51 and 78-102; these read SHAE…AQTP and FGRN…LSSP. The propeptide occupies 23–66; the sequence is EGPGGRDGGDQIFMEEDSGAHPAQDAQTPRSLLRSLLQAMQRPG. Residue F78 is modified to Phenylalanine amide. The propeptide occupies 81–94; it reads NTRGSWSNKRLSPR. F112 is modified (phenylalanine amide).

It belongs to the FARP (FMRFamide related peptide) family.

The protein resides in the secreted. Functionally, morphine modulating peptides. Have wide-ranging physiologic effects, including the modulation of morphine-induced analgesia, elevation of arterial blood pressure, and increased somatostatin secretion from the pancreas. The neuropeptide FF potentiates and sensitizes ASIC3 cation channel. The protein is Pro-FMRFamide-related neuropeptide FF (NPFF) of Bos taurus (Bovine).